The sequence spans 855 residues: DNA polymerase (855 aa).

Residues Lys-107–Glu-332 enclose the 3'-5' exonuclease domain. Residues Lys-333–Lys-833 are polymerase.

The protein belongs to the DNA polymerase type-A family. In terms of assembly, single-chain monomer with multiple functions.

The catalysed reaction is DNA(n) + a 2'-deoxyribonucleoside 5'-triphosphate = DNA(n+1) + diphosphate. In terms of biological role, replicates the viral genomic DNA. This polymerase possesses two enzymatic activities: DNA synthesis (polymerase) and an exonucleolytic activity that degrades single-stranded DNA in the 3'-5' direction for proofreading purpose. The DNA synthesis very likely occurs by strand displacement. This is DNA polymerase from Escherichia phage T5 (Enterobacteria phage T5).